A 640-amino-acid polypeptide reads, in one-letter code: 1,4-alpha-glucan branching enzyme GlgB (640 aa).

Aspartate 318 acts as the Nucleophile in catalysis. Catalysis depends on glutamate 371, which acts as the Proton donor.

This sequence belongs to the glycosyl hydrolase 13 family. GlgB subfamily. Monomer.

It carries out the reaction Transfers a segment of a (1-&gt;4)-alpha-D-glucan chain to a primary hydroxy group in a similar glucan chain.. Its pathway is glycan biosynthesis; glycogen biosynthesis. Its function is as follows. Catalyzes the formation of the alpha-1,6-glucosidic linkages in glycogen by scission of a 1,4-alpha-linked oligosaccharide from growing alpha-1,4-glucan chains and the subsequent attachment of the oligosaccharide to the alpha-1,6 position. The chain is 1,4-alpha-glucan branching enzyme GlgB from Francisella tularensis subsp. novicida (strain U112).